Consider the following 347-residue polypeptide: NADH-ubiquinone oxidoreductase chain 2 (347 aa).

Transmembrane regions (helical) follow at residues 3–23, 59–79, 95–115, 127–147, 149–169, 178–198, 200–220, 241–261, 274–294, and 325–345; these read PLTL…TVFS, YFLT…LNIL, PVLI…HFWV, GLIL…QISP, INPT…GWGG, ILAY…TFNP, TMVL…MMFM, VSTI…TGFI, GNII…YFYM, and LITP…ALSV.

The protein belongs to the complex I subunit 2 family. As to quaternary structure, core subunit of respiratory chain NADH dehydrogenase (Complex I) which is composed of 45 different subunits. Interacts with TMEM242.

It localises to the mitochondrion inner membrane. The enzyme catalyses a ubiquinone + NADH + 5 H(+)(in) = a ubiquinol + NAD(+) + 4 H(+)(out). Its function is as follows. Core subunit of the mitochondrial membrane respiratory chain NADH dehydrogenase (Complex I) which catalyzes electron transfer from NADH through the respiratory chain, using ubiquinone as an electron acceptor. Essential for the catalytic activity and assembly of complex I. The polypeptide is NADH-ubiquinone oxidoreductase chain 2 (Oryctolagus cuniculus (Rabbit)).